Consider the following 384-residue polypeptide: Cytochrome b (384 aa).

Helical transmembrane passes span 32-52, 76-98, 113-133, and 179-199; these read FGSL…FLAM, WLLR…LHMA, LWNM…MGYC, and FFSL…LHLL. Residues histidine 82 and histidine 96 each contribute to the heme b site. Residues histidine 183 and histidine 197 each contribute to the heme b site. Position 202 (histidine 202) interacts with a ubiquinone. Helical transmembrane passes span 225 to 245, 289 to 309, 321 to 341, and 348 to 368; these read FLFK…FLIS, MMGV…PFVD, LSKI…LIGA, and YIII…ILLP.

It belongs to the cytochrome b family. As to quaternary structure, fungal cytochrome b-c1 complex contains 10 subunits; 3 respiratory subunits, 2 core proteins and 5 low-molecular weight proteins. Cytochrome b-c1 complex is a homodimer. Requires heme b as cofactor.

The protein localises to the mitochondrion inner membrane. In terms of biological role, component of the ubiquinol-cytochrome c reductase complex (complex III or cytochrome b-c1 complex) that is part of the mitochondrial respiratory chain. The b-c1 complex mediates electron transfer from ubiquinol to cytochrome c. Contributes to the generation of a proton gradient across the mitochondrial membrane that is then used for ATP synthesis. This Starmerella bacillaris (Yeast) protein is Cytochrome b (COB).